Reading from the N-terminus, the 277-residue chain is 3-methyl-2-oxobutanoate hydroxymethyltransferase (277 aa).

Mg(2+) is bound by residues Asp42 and Asp81. 3-methyl-2-oxobutanoate contacts are provided by residues 42–43 (DS), Asp81, and Lys110. Residue Glu112 participates in Mg(2+) binding. Catalysis depends on Glu179, which acts as the Proton acceptor.

The protein belongs to the PanB family. As to quaternary structure, homodecamer; pentamer of dimers. Requires Mg(2+) as cofactor.

The protein localises to the cytoplasm. The catalysed reaction is 3-methyl-2-oxobutanoate + (6R)-5,10-methylene-5,6,7,8-tetrahydrofolate + H2O = 2-dehydropantoate + (6S)-5,6,7,8-tetrahydrofolate. Its pathway is cofactor biosynthesis; (R)-pantothenate biosynthesis; (R)-pantoate from 3-methyl-2-oxobutanoate: step 1/2. Its function is as follows. Catalyzes the reversible reaction in which hydroxymethyl group from 5,10-methylenetetrahydrofolate is transferred onto alpha-ketoisovalerate to form ketopantoate. The chain is 3-methyl-2-oxobutanoate hydroxymethyltransferase from Anaplasma marginale (strain St. Maries).